A 407-amino-acid polypeptide reads, in one-letter code: Homeobox even-skipped homolog protein 1 (407 aa).

Disordered regions lie at residues 29-120 (EAVG…SDFY) and 137-179 (EYQH…ACSA). The segment covering 102-114 (DSLSGQGQPSSSD) has biased composition (polar residues). Positions 183–242 (MRRYRTAFTREQIARLEKEFYRENYVSRPRRCELAAALNLPETTIKVWFQNRRMKDKRQR) form a DNA-binding region, homeobox.

The protein belongs to the even-skipped homeobox family.

It localises to the nucleus. May play a role in the specification of neuronal cell types. This Homo sapiens (Human) protein is Homeobox even-skipped homolog protein 1 (EVX1).